Here is a 390-residue protein sequence, read N- to C-terminus: GTPase Obg (390 aa).

The region spanning 1–159 (MKFVDEAAIL…RELMLELLLL (159 aa)) is the Obg domain. Positions 160–333 (ADVGMLGLPN…LCWDVMSFLN (174 aa)) constitute an OBG-type G domain. GTP contacts are provided by residues 166–173 (GLPNAGKS), 191–195 (FTTLI), 213–216 (DIPG), 283–286 (NKID), and 314–316 (SAA). Residues S173 and T193 each coordinate Mg(2+). The segment covering 364–384 (VEAEAEDDWDDDWDEEDDDGV) has biased composition (acidic residues). The segment at 364-390 (VEAEAEDDWDDDWDEEDDDGVEIIYER) is disordered.

Belongs to the TRAFAC class OBG-HflX-like GTPase superfamily. OBG GTPase family. In terms of assembly, monomer. Requires Mg(2+) as cofactor.

Its subcellular location is the cytoplasm. Its function is as follows. An essential GTPase which binds GTP, GDP and possibly (p)ppGpp with moderate affinity, with high nucleotide exchange rates and a fairly low GTP hydrolysis rate. Plays a role in control of the cell cycle, stress response, ribosome biogenesis and in those bacteria that undergo differentiation, in morphogenesis control. In Yersinia pestis, this protein is GTPase Obg.